The chain runs to 1151 residues: Protein BREAST CANCER SUSCEPTIBILITY 2 homolog A (1151 aa).

4 BRCA2 repeats span residues 63-97 (MPGE…EKVT), 116-150 (TAET…SDKI), 163-197 (FGVS…LEED), and 257-291 (LKVP…DPEL). A disordered region spans residues 408-427 (GFIPRGRQPGRPADQPLVDI).

Interacts with RAD51 and DMC1. Interacts with DSS1(I). Expressed in flower buds.

Involved in double-strand break repair and/or homologous recombination by mediating RAD51- and DMC1-facilitated DNA repair. Plays an essential role in both somatic and meiotic homologous recombination. Is crucial for the formation of RAD51 and DMC1 foci during male meiotic homologous recombination in prophase I. In Arabidopsis thaliana (Mouse-ear cress), this protein is Protein BREAST CANCER SUSCEPTIBILITY 2 homolog A.